The sequence spans 457 residues: Putative ankyrin repeat protein L112 (457 aa).

ANK repeat units follow at residues Q62–P91, S104–N132, S133–N162, Y193–S219, I220–K249, K251–E279, N281–T309, R310–S339, N341–Q368, N400–P429, and K431–K457.

The polypeptide is Putative ankyrin repeat protein L112 (Acanthamoeba polyphaga mimivirus (APMV)).